The primary structure comprises 382 residues: MRQIRSPRALRVIPLTALMLISGCGEKEQVSSATPPPDVGVYTVRAQALTLTTDLPGRTSAFRVAEVRPQVSGILQKRSFVEGAEVKLGQQLYQIDPRTYEAQLRRAEANRTSAQNLARRYETLLKTKAVSKQQYDDALAAWKQAEADYQVARIDVQYTRVLSPISGRIGRSTVTEGALVTNGQAQSLATVTQLDPIYVDVTQPITKLLGLQKALESGRLQKTGENQAEVSLTLDDGSAYPLPGTLKFSEVSVDPTTGSVTLRAEFPNPNRKLLPGMFVHALLKEGVQNAAILVPQQAISRDTRGVPSVWVVKADNTVESREIQTLRTVGNAWLISNGVTEGERIITEGVQRVRSGIAVNAVEAKNVNLVDGFAATTEASAN.

The N-terminal stretch at M1–G23 is a signal peptide. A lipid anchor (N-palmitoyl cysteine) is attached at C24. C24 carries S-diacylglycerol cysteine lipidation. Residues R98 to T127 are a coiled coil.

The protein belongs to the membrane fusion protein (MFP) (TC 8.A.1) family.

The protein resides in the cell inner membrane. The periplasmic linker protein component of an organic solvent efflux pump. Involved in export of a number of low log POW compounds including hexane (log POW 3.5), toluene (log POW 2.5) and dimethylphthalate (log POW 2.3). The solvent resistance phenotype has been postulated to depend on the operon expression level. In Pseudomonas putida (Arthrobacter siderocapsulatus), this protein is Solvent efflux pump periplasmic linker SrpA (srpA).